The primary structure comprises 129 residues: Small ribosomal subunit protein uS9 (129 aa).

This sequence belongs to the universal ribosomal protein uS9 family.

In Chlorobium limicola (strain DSM 245 / NBRC 103803 / 6330), this protein is Small ribosomal subunit protein uS9.